The sequence spans 745 residues: Cytoskeleton-associated protein 2-like (745 aa).

The segment at 25-141 is disordered; it reads AKGKLKSQNT…GELSRKPVGS (117 aa). Over residues 30 to 61 the composition is skewed to polar residues; it reads KSQNTKPYLKSKNNCQNQPPSKSTIRPKNDVT. Over residues 109–120 the composition is skewed to low complexity; the sequence is SSNPYSKPSSKS. Positions 121–133 are enriched in polar residues; the sequence is FQQCEAGSSTTGE. Positions 185-187 match the KEN box motif; that stretch reads KEN. Residues 192 to 203 show a composition bias toward basic and acidic residues; the sequence is LTEPERKPDPKL. Disordered regions lie at residues 192–217, 256–276, and 385–411; these read LTEP…YNQT, VKSQ…KPSR, and RFNS…NNGF. K198 participates in a covalent cross-link: Glycyl lysine isopeptide (Lys-Gly) (interchain with G-Cter in SUMO1); alternate. Residue K198 forms a Glycyl lysine isopeptide (Lys-Gly) (interchain with G-Cter in SUMO2); alternate linkage. Position 204 is a phosphotyrosine (Y204). Residues 389 to 411 are compositionally biased toward polar residues; the sequence is AIPSTPSIRPNGTSGNKHNNNGF. At T742 the chain carries Phosphothreonine. Phosphoserine is present on S745.

It belongs to the CKAP2 family. Ubiquitinated by the anaphase promoting complex/cyclosome (APC/C).

It localises to the cytoplasm. The protein localises to the cytoskeleton. The protein resides in the spindle pole. Microtubule-associated protein required for mitotic spindle formation and cell-cycle progression in neural progenitor cells. The polypeptide is Cytoskeleton-associated protein 2-like (CKAP2L) (Homo sapiens (Human)).